A 326-amino-acid polypeptide reads, in one-letter code: Probable cell division protein WhiA (326 aa).

A DNA-binding region (H-T-H motif) is located at residues 275–308 (SLDELGHHADPPMTKDAVAGRIRRLLAMADKKAV).

Belongs to the WhiA family.

Functionally, involved in cell division and chromosome segregation. In Clavibacter michiganensis subsp. michiganensis (strain NCPPB 382), this protein is Probable cell division protein WhiA.